We begin with the raw amino-acid sequence, 398 residues long: Bifunctional enzyme IspD/IspF (398 aa).

The segment at 1 to 234 (MPNPPRTAAI…SRLTALLGDI (234 aa)) is 2-C-methyl-D-erythritol 4-phosphate cytidylyltransferase. Positions 235–398 (RTGTGYDVHA…LPWGAEGLAG (164 aa)) are 2-C-methyl-D-erythritol 2,4-cyclodiphosphate synthase. Asp241 and His243 together coordinate a divalent metal cation. 4-CDP-2-C-methyl-D-erythritol 2-phosphate-binding positions include 241–243 (DVH) and 267–268 (HS). His275 serves as a coordination point for a divalent metal cation. Residues 289–291 (DIG), 365–368 (TTSE), Phe372, and Arg375 contribute to the 4-CDP-2-C-methyl-D-erythritol 2-phosphate site.

The protein in the N-terminal section; belongs to the IspD/TarI cytidylyltransferase family. IspD subfamily. In the C-terminal section; belongs to the IspF family. It depends on a divalent metal cation as a cofactor.

It carries out the reaction 2-C-methyl-D-erythritol 4-phosphate + CTP + H(+) = 4-CDP-2-C-methyl-D-erythritol + diphosphate. It catalyses the reaction 4-CDP-2-C-methyl-D-erythritol 2-phosphate = 2-C-methyl-D-erythritol 2,4-cyclic diphosphate + CMP. It functions in the pathway isoprenoid biosynthesis; isopentenyl diphosphate biosynthesis via DXP pathway; isopentenyl diphosphate from 1-deoxy-D-xylulose 5-phosphate: step 2/6. Its pathway is isoprenoid biosynthesis; isopentenyl diphosphate biosynthesis via DXP pathway; isopentenyl diphosphate from 1-deoxy-D-xylulose 5-phosphate: step 4/6. In terms of biological role, bifunctional enzyme that catalyzes the formation of 4-diphosphocytidyl-2-C-methyl-D-erythritol from CTP and 2-C-methyl-D-erythritol 4-phosphate (MEP) (IspD), and catalyzes the conversion of 4-diphosphocytidyl-2-C-methyl-D-erythritol 2-phosphate (CDP-ME2P) to 2-C-methyl-D-erythritol 2,4-cyclodiphosphate (ME-CPP) with a corresponding release of cytidine 5-monophosphate (CMP) (IspF). This chain is Bifunctional enzyme IspD/IspF, found in Rhodopseudomonas palustris (strain BisB5).